The primary structure comprises 173 residues: Nucleoside-triphosphatase THEP1 (173 aa).

ATP is bound by residues 15–22 (GMPGVGKT) and 101–108 (LKIIDEIG).

It belongs to the THEP1 NTPase family.

It carries out the reaction a ribonucleoside 5'-triphosphate + H2O = a ribonucleoside 5'-diphosphate + phosphate + H(+). Has nucleotide phosphatase activity towards ATP, GTP, CTP, TTP and UTP. May hydrolyze nucleoside diphosphates with lower efficiency. This is Nucleoside-triphosphatase THEP1 from Pyrobaculum aerophilum (strain ATCC 51768 / DSM 7523 / JCM 9630 / CIP 104966 / NBRC 100827 / IM2).